We begin with the raw amino-acid sequence, 601 residues long: Bifunctional protein GlmU (601 aa).

Positions 1-375 (MKSDLAIVIL…SELLLGVNNR (375 aa)) are pyrophosphorylase. UDP-N-acetyl-alpha-D-glucosamine contacts are provided by residues 10–13 (LAAG), K24, Q75, and 81–82 (GT). D165 is a binding site for Mg(2+). Positions 201, 216, 230, and 373 each coordinate UDP-N-acetyl-alpha-D-glucosamine. N373 contributes to the Mg(2+) binding site. Positions 376-396 (VQLAKTEKILNDQIIKRWQLY) are linker. An N-acetyltransferase region spans residues 397-601 (GVTIKSPETT…PKWAENRGDG (205 aa)). Positions 478 and 496 each coordinate UDP-N-acetyl-alpha-D-glucosamine. Catalysis depends on H508, which acts as the Proton acceptor. 2 residues coordinate UDP-N-acetyl-alpha-D-glucosamine: Y511 and N522. Residues A525, 531–532 (NY), and A568 each bind acetyl-CoA.

This sequence in the N-terminal section; belongs to the N-acetylglucosamine-1-phosphate uridyltransferase family. In the C-terminal section; belongs to the transferase hexapeptide repeat family. In terms of assembly, homotrimer. The cofactor is Mg(2+).

The protein localises to the cytoplasm. It catalyses the reaction alpha-D-glucosamine 1-phosphate + acetyl-CoA = N-acetyl-alpha-D-glucosamine 1-phosphate + CoA + H(+). It carries out the reaction N-acetyl-alpha-D-glucosamine 1-phosphate + UTP + H(+) = UDP-N-acetyl-alpha-D-glucosamine + diphosphate. It participates in nucleotide-sugar biosynthesis; UDP-N-acetyl-alpha-D-glucosamine biosynthesis; N-acetyl-alpha-D-glucosamine 1-phosphate from alpha-D-glucosamine 6-phosphate (route II): step 2/2. The protein operates within nucleotide-sugar biosynthesis; UDP-N-acetyl-alpha-D-glucosamine biosynthesis; UDP-N-acetyl-alpha-D-glucosamine from N-acetyl-alpha-D-glucosamine 1-phosphate: step 1/1. Its pathway is bacterial outer membrane biogenesis; LPS lipid A biosynthesis. In terms of biological role, catalyzes the last two sequential reactions in the de novo biosynthetic pathway for UDP-N-acetylglucosamine (UDP-GlcNAc). The C-terminal domain catalyzes the transfer of acetyl group from acetyl coenzyme A to glucosamine-1-phosphate (GlcN-1-P) to produce N-acetylglucosamine-1-phosphate (GlcNAc-1-P), which is converted into UDP-GlcNAc by the transfer of uridine 5-monophosphate (from uridine 5-triphosphate), a reaction catalyzed by the N-terminal domain. This chain is Bifunctional protein GlmU, found in Tropheryma whipplei (strain TW08/27) (Whipple's bacillus).